The following is a 301-amino-acid chain: Haloalkane dehalogenase (301 aa).

The Nucleophile role is filled by D123. D250 functions as the Proton donor in the catalytic mechanism. The active-site Proton acceptor is H279.

Belongs to the haloalkane dehalogenase family. Type 1 subfamily. As to quaternary structure, monomer.

The catalysed reaction is 1-haloalkane + H2O = a halide anion + a primary alcohol + H(+). Catalyzes hydrolytic cleavage of carbon-halogen bonds in halogenated aliphatic compounds, leading to the formation of the corresponding primary alcohols, halide ions and protons. This is Haloalkane dehalogenase from Phenylobacterium zucineum (strain HLK1).